Here is a 187-residue protein sequence, read N- to C-terminus: Ribonuclease HII (187 aa).

The RNase H type-2 domain maps to methionine 1–glutamate 187. 3 residues coordinate a divalent metal cation: aspartate 7, glutamate 8, and aspartate 99.

It belongs to the RNase HII family. Mn(2+) serves as cofactor. Requires Mg(2+) as cofactor.

Its subcellular location is the cytoplasm. It carries out the reaction Endonucleolytic cleavage to 5'-phosphomonoester.. Endonuclease that specifically degrades the RNA of RNA-DNA hybrids. This is Ribonuclease HII from Francisella tularensis subsp. holarctica (strain FTNF002-00 / FTA).